We begin with the raw amino-acid sequence, 565 residues long: Amino-acid acetyltransferase, mitochondrial (565 aa).

Residues 38 to 58 (DIATATPAATPSDGAQPPAQN) are disordered. In terms of domain architecture, N-acetyltransferase spans 352–540 (LPVRVLRSME…EFGGGRLVRV (189 aa)).

It belongs to the acetyltransferase family.

The protein localises to the mitochondrion. The catalysed reaction is L-glutamate + acetyl-CoA = N-acetyl-L-glutamate + CoA + H(+). It participates in amino-acid biosynthesis; L-arginine biosynthesis; N(2)-acetyl-L-ornithine from L-glutamate: step 1/4. Functionally, N-acetylglutamate synthase involved in arginine biosynthesis. In Cryptococcus neoformans var. neoformans serotype D (strain B-3501A) (Filobasidiella neoformans), this protein is Amino-acid acetyltransferase, mitochondrial (ARG2).